We begin with the raw amino-acid sequence, 144 residues long: Putative pre-16S rRNA nuclease (144 aa).

This sequence belongs to the YqgF nuclease family.

Its subcellular location is the cytoplasm. Could be a nuclease involved in processing of the 5'-end of pre-16S rRNA. This Pseudomonas aeruginosa (strain LESB58) protein is Putative pre-16S rRNA nuclease.